The chain runs to 357 residues: NADH-quinone oxidoreductase subunit H (357 aa).

Helical transmembrane passes span 20 to 40 (WLVLWTIVKIVVIAVPIILCV), 92 to 112 (ILFVVAPVVTLMPALAAWAVV), 127 to 147 (LLYVMAITSIGVYGVIVAGWA), 165 to 185 (VSYELAIGFVLVTVLLVSGSL), 206 to 226 (FLSWNWLPLLPLFVIYVISAV), 254 to 274 (MAFALFFLGEYANMILLSCMA), 294 to 314 (IPGWIWLGIKTFCVVSLFVWF), and 329 to 349 (LGWKIFIPLTGVWLVVVAIWM).

This sequence belongs to the complex I subunit 1 family. As to quaternary structure, NDH-1 is composed of 14 different subunits. Subunits NuoA, H, J, K, L, M, N constitute the membrane sector of the complex.

The protein localises to the cell inner membrane. It carries out the reaction a quinone + NADH + 5 H(+)(in) = a quinol + NAD(+) + 4 H(+)(out). NDH-1 shuttles electrons from NADH, via FMN and iron-sulfur (Fe-S) centers, to quinones in the respiratory chain. The immediate electron acceptor for the enzyme in this species is believed to be ubiquinone. Couples the redox reaction to proton translocation (for every two electrons transferred, four hydrogen ions are translocated across the cytoplasmic membrane), and thus conserves the redox energy in a proton gradient. This subunit may bind ubiquinone. This chain is NADH-quinone oxidoreductase subunit H, found in Bordetella petrii (strain ATCC BAA-461 / DSM 12804 / CCUG 43448).